The primary structure comprises 221 residues: Probable GTP-binding protein EngB (221 aa).

Residues 23-211 form the EngB-type G domain; the sequence is PLREVAFAGR…DNLIIKWLFE (189 aa). Positions 38 and 60 each coordinate Mg(2+).

The protein belongs to the TRAFAC class TrmE-Era-EngA-EngB-Septin-like GTPase superfamily. EngB GTPase family. The cofactor is Mg(2+).

Functionally, necessary for normal cell division and for the maintenance of normal septation. The chain is Probable GTP-binding protein EngB from Polynucleobacter asymbioticus (strain DSM 18221 / CIP 109841 / QLW-P1DMWA-1) (Polynucleobacter necessarius subsp. asymbioticus).